We begin with the raw amino-acid sequence, 510 residues long: Aspartate kinase FUB3 (510 aa).

ACT domains are found at residues 372-440 (ILSN…VLPD) and 446-510 (LVGA…KNAM).

This sequence belongs to the aspartokinase family.

The enzyme catalyses L-aspartate + ATP = 4-phospho-L-aspartate + ADP. The protein operates within mycotoxin biosynthesis. Functionally, aspartate kinase; part of the gene cluster that mediates the biosynthesis of fusaric acid, a mycotoxin with low to moderate toxicity to animals and humans, but with high phytotoxic properties. L-aspartate is suggested as fusaric acid amino acid precursor that is activated and further processed to O-acetyl-L-homoserine by cluster enzymes aspartate kinase FUB3 and homoserine O-acetyltransferase FUB5, as well as enzymes of the primary metabolism. The polyketide synthase (PKS) FUB1 generates the triketide trans-2-hexenal which is presumptively released by the hydrolase FUB4 and linked to the NRPS-bound amino acid precursor by NAD(P)-dependent dehydrogenase FUB6. FUB1, FUB4, and the non-canonical NRPS Fub8 may form an enzyme complex. Further processing of the NRPS-bound intermediate might be carried out by FUB6 and the sulfhydrylase FUB7, enabling a spontaneous electrocyclization to close the carbon backbone of fusaric acid. Dihydrofusaric acid is likely to be released via reduction by the thioester reductase (TR) domain of FUB8 whereupon the final oxidation to fusaric acid may (also) be performed by the FMN-dependent dehydrogenase FUB9. This chain is Aspartate kinase FUB3, found in Gibberella moniliformis (strain M3125 / FGSC 7600) (Maize ear and stalk rot fungus).